The primary structure comprises 529 residues: Peptide chain release factor 3 (529 aa).

The region spanning 11 to 280 (SKRRTFAIIS…GLTDWAPAPL (270 aa)) is the tr-type G domain. Residues 20–27 (SHPDAGKT), 88–92 (DTPGH), and 142–145 (NKLD) contribute to the GTP site.

It belongs to the TRAFAC class translation factor GTPase superfamily. Classic translation factor GTPase family. PrfC subfamily.

The protein resides in the cytoplasm. Functionally, increases the formation of ribosomal termination complexes and stimulates activities of RF-1 and RF-2. It binds guanine nucleotides and has strong preference for UGA stop codons. It may interact directly with the ribosome. The stimulation of RF-1 and RF-2 is significantly reduced by GTP and GDP, but not by GMP. In Vibrio vulnificus (strain CMCP6), this protein is Peptide chain release factor 3.